A 326-amino-acid chain; its full sequence is UDP-N-acetylglucosamine transporter (326 aa).

Transmembrane regions (helical) follow at residues 8-24, 42-58, 138-154, 174-190, 210-226, 247-263, 269-285, and 296-312; these read LSLGILVFQTTSLVLTM, AVVVAELLKIMACILLV, VYQWLSLVILMTGVAFV, FVGLMAVLTACFSSGFA, IQLGFFGSIFGLMGVYI, IVVILQALGGLVIAAVI, ILKGFATSLSIILSTLI, and TSVFFLGAILVITATFL.

It belongs to the nucleotide-sugar transporter family. SLC35A subfamily. Interacts with SLC35A2; the interaction is reduced in the presence of SLC35A4. Found in a complex with SLC35A2 and SLC35A4.

Its subcellular location is the golgi apparatus membrane. In terms of biological role, uridine diphosphate-N-acetylglucosamine (UDP-GlcNAc) transporter in the Golgi apparatus. May supply UDP-GlcNAc as substrate for Golgi-resident glycosyltransferases that generate branching of diantennary oligosaccharides. The polypeptide is UDP-N-acetylglucosamine transporter (SLC35A3) (Canis lupus familiaris (Dog)).